Here is a 505-residue protein sequence, read N- to C-terminus: 2,3-bisphosphoglycerate-independent phosphoglycerate mutase (505 aa).

Aspartate 12 and serine 62 together coordinate Mn(2+). Residue serine 62 is the Phosphoserine intermediate of the active site. Substrate-binding positions include histidine 123, 153 to 154 (RD), arginine 185, arginine 191, 257 to 260 (RPDR), and lysine 330. Mn(2+) is bound by residues aspartate 397, histidine 401, aspartate 438, histidine 439, and histidine 456.

The protein belongs to the BPG-independent phosphoglycerate mutase family. Monomer. Mn(2+) serves as cofactor.

The enzyme catalyses (2R)-2-phosphoglycerate = (2R)-3-phosphoglycerate. It participates in carbohydrate degradation; glycolysis; pyruvate from D-glyceraldehyde 3-phosphate: step 3/5. Functionally, catalyzes the interconversion of 2-phosphoglycerate and 3-phosphoglycerate. The chain is 2,3-bisphosphoglycerate-independent phosphoglycerate mutase from Staphylococcus aureus (strain MRSA252).